The chain runs to 118 residues: Beta-2-microglobulin (118 aa).

Residues Met-1–Ala-20 form the signal peptide. An Ig-like C1-type domain is found at Pro-25–Val-112. A disulfide bridge connects residues Cys-45 and Cys-99.

This sequence belongs to the beta-2-microglobulin family. As to quaternary structure, heterodimer of an alpha chain and a beta chain. Beta-2-microglobulin is the beta-chain of major histocompatibility complex class I molecules. Forms a heterotrimer with MR1 and a metabolite antigen.

It is found in the secreted. Component of the class I major histocompatibility complex (MHC). Involved in the presentation of peptide antigens to the immune system. The chain is Beta-2-microglobulin (B2M) from Bos taurus (Bovine).